The chain runs to 239 residues: Large ribosomal subunit protein uL2 (239 aa).

Disordered stretches follow at residues methionine 1–alanine 28 and serine 199–glycine 239. Positions lysine 225–glycine 239 are enriched in basic residues.

It belongs to the universal ribosomal protein uL2 family. Part of the 50S ribosomal subunit. Forms a bridge to the 30S subunit in the 70S ribosome.

Functionally, one of the primary rRNA binding proteins. Required for association of the 30S and 50S subunits to form the 70S ribosome, for tRNA binding and peptide bond formation. It has been suggested to have peptidyltransferase activity; this is somewhat controversial. Makes several contacts with the 16S rRNA in the 70S ribosome. This chain is Large ribosomal subunit protein uL2, found in Staphylothermus marinus (strain ATCC 43588 / DSM 3639 / JCM 9404 / F1).